Reading from the N-terminus, the 175-residue chain is Translation initiation factor IF-3 (175 aa).

It belongs to the IF-3 family. Monomer.

The protein resides in the cytoplasm. IF-3 binds to the 30S ribosomal subunit and shifts the equilibrium between 70S ribosomes and their 50S and 30S subunits in favor of the free subunits, thus enhancing the availability of 30S subunits on which protein synthesis initiation begins. This is Translation initiation factor IF-3 from Staphylococcus saprophyticus subsp. saprophyticus (strain ATCC 15305 / DSM 20229 / NCIMB 8711 / NCTC 7292 / S-41).